Here is a 319-residue protein sequence, read N- to C-terminus: MVVVVDTVSATPIRPRHPEKAARPDSLSPKKPEWIRVRAPTSRGYADTRAIVKENGLVTVCEEAGCPNIGECWDKKHATFMIMGDTCTRACAFCNVKTGMPEALDQAEPEHVAEATFKLGLKHIVITSVDRDDLADGGAAHIAATIRAVRARCPSTTIEILTPDFLRKDGALETVVAAKPDVFNHNLETVPSRYLTVRPGARYFHSIRLLQRVKEIDPTMFTKSGIMVGLGEERHEVLQVMDDLRSADVDFLTIGQYLQPSLKHHAVMRFVTPEEFAGYESVAYSKGFLMVSSSPMTRSSHHAGDNFTKLQAARAALSR.

7 residues coordinate [4Fe-4S] cluster: C61, C66, C72, C87, C91, C94, and S300. One can recognise a Radical SAM core domain in the interval 73–289; that stretch reads WDKKHATFMI…ESVAYSKGFL (217 aa).

This sequence belongs to the radical SAM superfamily. Lipoyl synthase family. The cofactor is [4Fe-4S] cluster.

It is found in the cytoplasm. The catalysed reaction is [[Fe-S] cluster scaffold protein carrying a second [4Fe-4S](2+) cluster] + N(6)-octanoyl-L-lysyl-[protein] + 2 oxidized [2Fe-2S]-[ferredoxin] + 2 S-adenosyl-L-methionine + 4 H(+) = [[Fe-S] cluster scaffold protein] + N(6)-[(R)-dihydrolipoyl]-L-lysyl-[protein] + 4 Fe(3+) + 2 hydrogen sulfide + 2 5'-deoxyadenosine + 2 L-methionine + 2 reduced [2Fe-2S]-[ferredoxin]. It functions in the pathway protein modification; protein lipoylation via endogenous pathway; protein N(6)-(lipoyl)lysine from octanoyl-[acyl-carrier-protein]: step 2/2. Functionally, catalyzes the radical-mediated insertion of two sulfur atoms into the C-6 and C-8 positions of the octanoyl moiety bound to the lipoyl domains of lipoate-dependent enzymes, thereby converting the octanoylated domains into lipoylated derivatives. This chain is Lipoyl synthase, found in Rhodopseudomonas palustris (strain BisB18).